The chain runs to 308 residues: Spermidine synthase 2 (308 aa).

The 238-residue stretch at 17-254 (PGWFSEISPL…GVIGFMLCST (238 aa)) folds into the PABS domain. Gln-48 is an S-adenosyl 3-(methylsulfanyl)propylamine binding site. Position 78 (Tyr-78) interacts with putrescine. Residues Gln-79, Asp-103, Glu-123, 154–155 (DG), and Asp-173 each bind S-adenosyl 3-(methylsulfanyl)propylamine. Asp-173 (proton acceptor) is an active-site residue. Putrescine is bound by residues 173-176 (DSSD) and Tyr-242.

Belongs to the spermidine/spermine synthase family.

It carries out the reaction S-adenosyl 3-(methylsulfanyl)propylamine + putrescine = S-methyl-5'-thioadenosine + spermidine + H(+). The protein operates within amine and polyamine biosynthesis; spermidine biosynthesis; spermidine from putrescine: step 1/1. The protein is Spermidine synthase 2 of Hyoscyamus niger (Black henbane).